The chain runs to 196 residues: GTP cyclohydrolase-2 (196 aa).

A GTP-binding site is contributed by 49–53 (RVHSE). 3 residues coordinate Zn(2+): Cys54, Cys65, and Cys67. Residues Gln70, 92-94 (EGR), and Thr114 contribute to the GTP site. The active-site Proton acceptor is the Asp126. Arg128 functions as the Nucleophile in the catalytic mechanism. Residues Thr149 and Lys154 each contribute to the GTP site.

It belongs to the GTP cyclohydrolase II family. Homodimer. Zn(2+) is required as a cofactor.

The enzyme catalyses GTP + 4 H2O = 2,5-diamino-6-hydroxy-4-(5-phosphoribosylamino)-pyrimidine + formate + 2 phosphate + 3 H(+). The protein operates within cofactor biosynthesis; riboflavin biosynthesis; 5-amino-6-(D-ribitylamino)uracil from GTP: step 1/4. Functionally, catalyzes the conversion of GTP to 2,5-diamino-6-ribosylamino-4(3H)-pyrimidinone 5'-phosphate (DARP), formate and pyrophosphate. The polypeptide is GTP cyclohydrolase-2 (Salmonella choleraesuis (strain SC-B67)).